A 521-amino-acid polypeptide reads, in one-letter code: Cyclic AMP-responsive element-binding protein 3-like protein 2 (521 aa).

Residues 1 to 378 lie on the Cytoplasmic side of the membrane; it reads MEVLESGEQS…CKLAGTQTGT (378 aa). Over residues 83–103 the composition is skewed to polar residues; that stretch reads YSLSEEPRTQSPFTHAATSDS. The interval 83–106 is disordered; that stretch reads YSLSEEPRTQSPFTHAATSDSFND. Residue S93 is modified to Phosphoserine. K178 participates in a covalent cross-link: Glycyl lysine isopeptide (Lys-Gly) (interchain with G-Cter in SUMO2). S191 bears the Phosphoserine mark. A disordered region spans residues 196–264; the sequence is SVDQLHLPPT…PHKLQGSGPL (69 aa). The segment covering 208 to 220 has biased composition (low complexity); sequence SSHSSDSEGSLSP. The region spanning 294 to 357 is the bZIP domain; that stretch reads ALKKIRRKIK…RTLLQQLQKL (64 aa). The interval 296–325 is basic motif; that stretch reads KKIRRKIKNKISAQESRRKKKEYMDSLEKK. Residues 336-357 form a leucine-zipper region; it reads LRKKVEVLENTNRTLLQQLQKL. A helical; Signal-anchor for type II membrane protein membrane pass occupies residues 379–399; it reads CLMVVVLCFAVAFGSFFQGYG. Residues 400–521 lie on the Lumenal side of the membrane; it reads PYPSATKMAL…ELERRVNATF (122 aa). The S1P recognition motif lies at 427-430; that stretch reads RNLL. 3 N-linked (GlcNAc...) asparagine glycosylation sites follow: N481, N505, and N518.

It belongs to the bZIP family. ATF subfamily. Binds DNA as a dimer. Post-translationally, upon ER stress, translocated to the Golgi apparatus, where it is processed by regulated intramembrane proteolysis (RIP) to release the cytosol-facing N-terminal transcription factor domain. The cleavage is performed sequentially by site-1 and site-2 proteases (S1P/MBTPS1 and S2P/MBTPS2). In terms of processing, N-glycosylated. Ubiquitinated by HRD1/SYVN1; undergoes 'Lys-48'-linked ubiquitination, followed by rapid proteasomal degradation under normal conditions. Upon ER stress, SYVN1 E3 ubiquitin-protein ligase dissociates from its substrate, ubiquitination does not occur and CREB3L2 is stabilized. In terms of tissue distribution, widely expressed, including in lung, bladder, ovary, testis and spleen. Highly expressed in chondrocytes.

Its subcellular location is the endoplasmic reticulum membrane. It is found in the nucleus. In terms of biological role, transcription factor involved in unfolded protein response (UPR). In the absence of endoplasmic reticulum (ER) stress, inserted into ER membranes, with N-terminal DNA-binding and transcription activation domains oriented toward the cytosolic face of the membrane. In response to ER stress, transported to the Golgi, where it is cleaved in a site-specific manner by resident proteases S1P/MBTPS1 and S2P/MBTPS2. The released N-terminal cytosolic domain is translocated to the nucleus to effect transcription of specific target genes. Plays a critical role in chondrogenesis by activating the transcription of SEC23A, which promotes the transport and secretion of cartilage matrix proteins, and possibly that of ER biogenesis-related genes. In a neuroblastoma cell line, protects cells from ER stress-induced death. In vitro activates transcription of target genes via direct binding to the CRE site. This Mus musculus (Mouse) protein is Cyclic AMP-responsive element-binding protein 3-like protein 2 (Creb3l2).